The primary structure comprises 313 residues: Deoxyribonucleoside regulator (313 aa).

Residues 23 to 42 (QQQIAEQLNISRPTVSRLLQ) constitute a DNA-binding region (H-T-H motif).

This sequence belongs to the SorC transcriptional regulatory family. As to quaternary structure, homooctamer.

Its function is as follows. Negative regulator of the dra-nupC-pdp operon. DeoR binds cooperatively to the operator DNA, which consists of a palindrome and a direct repeat sequence located 3' to the palindrome. The sequence is that of Deoxyribonucleoside regulator from Bacillus subtilis (strain 168).